The chain runs to 132 residues: MKKTPLLNVALSRVIAGMGHGDILVIGDAGLPVPPGVEMIDLAVTPGLPDFASVLRAVLSELQVERHVLAEEMQKVVPPALVEIERLKGKLGKREWLSHENFKVLSRSARAVVRTGECQPYSNIALISGVTF.

Residue His-20 is the Proton donor of the active site. Substrate-binding positions include Asp-28, His-99, and 121–123; that span reads YSN.

It belongs to the RbsD / FucU family. RbsD subfamily. In terms of assembly, homodecamer.

The protein localises to the cytoplasm. The enzyme catalyses beta-D-ribopyranose = beta-D-ribofuranose. Its pathway is carbohydrate metabolism; D-ribose degradation; D-ribose 5-phosphate from beta-D-ribopyranose: step 1/2. Its function is as follows. Catalyzes the interconversion of beta-pyran and beta-furan forms of D-ribose. This chain is D-ribose pyranase, found in Pseudomonas putida (strain GB-1).